Here is a 350-residue protein sequence, read N- to C-terminus: tRNA uridine(34) hydroxylase (350 aa).

The 95-residue stretch at 146–240 folds into the Rhodanese domain; the sequence is DDPDALFIDM…YARKAREQGL (95 aa). Residue cysteine 200 is the Cysteine persulfide intermediate of the active site.

It belongs to the TrhO family.

The catalysed reaction is uridine(34) in tRNA + AH2 + O2 = 5-hydroxyuridine(34) in tRNA + A + H2O. Its function is as follows. Catalyzes oxygen-dependent 5-hydroxyuridine (ho5U) modification at position 34 in tRNAs. The protein is tRNA uridine(34) hydroxylase of Shigella sonnei (strain Ss046).